The following is a 1625-amino-acid chain: Nonribosomal peptide synthetase aclP (1625 aa).

The Carrier 1 domain occupies 47–123 (TTMNPSSQLL…ALFTDLLSSE (77 aa)). At Ser-84 the chain carries O-(pantetheine 4'-phosphoryl)serine. Residues 127 to 157 (IPIPDPSDDSDDLSNPSSSTGGSPRVATPIS) form a disordered region. The condensation 1 stretch occupies residues 286–567 (ASSQSTVIWA…KYFQRALQLL (282 aa)). Residues 614–997 (FESAVSRNPM…GRTDRQIKLR (384 aa)) form an adenylation region. The region spanning 1096–1171 (SPMEKLVGDA…HLAAAIDSGL (76 aa)) is the Carrier 2 domain. Ser-1131 bears the O-(pantetheine 4'-phosphoryl)serine mark. The condensation 2 stretch occupies residues 1195 to 1585 (EWWHKYQINE…LQARIPLALS (391 aa)).

This sequence belongs to the NRP synthetase family.

Its pathway is mycotoxin biosynthesis. Functionally, nonribosomal peptide synthetase; part of the gene cluster that mediates the biosynthesis of aspirochlorine (or antibiotic A30641), an unusual halogenated spiro compound with distinctive antifungal properties due to selective inhibition of protein biosynthesis, and which is also active against bacteria, viruses, and murine tumor cells. The non-ribosomal peptide synthetase (NRPS) aclP is responsible the formation of the diketopiperazine (DKP) core from the condensation of 2 phenylalanine residues. One Phe residue is tailored into chlorotyrosine by hydroxylation and chlorination, whereas the second Phe undergoes an unprecedented C-C bond cleavage to be converted into glycine. After formation of the DKP, sulfur is incorporated into the DKP by conjugation with glutathione by aclG, followed by its stepwise degradation to the thiol by aclI, aclJ and aclK, and the dithiol oxidation by aclT. In addition, oxygenases (aclB, aclC, aclL and aclO) and O-methyltransferases (aclM and aclU) act as tailoring enzymes to produce the intermediate dechloroaspirochlorine. Ultimately, chlorination of dechloroaspirochlorine by the halogenase aclH is the last step in the aspirochlorine pathway. The sequence is that of Nonribosomal peptide synthetase aclP from Aspergillus oryzae (strain ATCC 42149 / RIB 40) (Yellow koji mold).